A 500-amino-acid polypeptide reads, in one-letter code: GTPase Der (500 aa).

2 consecutive EngA-type G domains span residues 3–166 (PVVA…MEEL) and 211–384 (IKLA…VSAT). GTP is bound by residues 9–16 (GRPNVGKS), 56–60 (DTGGI), 118–121 (NKID), 217–224 (GRPNVGKS), 264–268 (DTAGV), and 329–332 (NKWD). The KH-like domain occupies 385–469 (KRVGTSVLTR…PIRIQFQNSE (85 aa)). Residues 468-500 (SENPFEDRGGKLTMSQERQRKRLLGAVKNRNKK) are disordered. Basic residues predominate over residues 486-500 (QRKRLLGAVKNRNKK).

It belongs to the TRAFAC class TrmE-Era-EngA-EngB-Septin-like GTPase superfamily. EngA (Der) GTPase family. Associates with the 50S ribosomal subunit.

Functionally, GTPase that plays an essential role in the late steps of ribosome biogenesis. In Aliivibrio fischeri (strain ATCC 700601 / ES114) (Vibrio fischeri), this protein is GTPase Der.